We begin with the raw amino-acid sequence, 729 residues long: Neurochondrin (729 aa).

The residue at position 2 (S2) is an N-acetylserine. Position 2 is a phosphoserine (S2). Residues C3 and C4 are each lipidated (S-palmitoyl cysteine). R75 is modified (asymmetric dimethylarginine). At S448 the chain carries Phosphoserine.

It belongs to the neurochondrin family. As to quaternary structure, interacts with MCHR1. Interacts with SEMA4C. Interacts with DIAPH1 (via FH3 domain). Interacts with GRM5. Post-translationally, palmitoylated. Palmitoylation by ZDHHC1, ZDHHC3 and ZDHHC11 regulates the association of NCDN with endosome membranes. May also be palmitoylated by ZDHHC7. Expressed in brain and in peripheral nervous system (at protein level). Weakly expressed in neurites.

It is found in the cytoplasm. The protein resides in the cytosol. It localises to the endosome membrane. The protein localises to the cell projection. Its subcellular location is the dendrite. It is found in the postsynapse. In terms of biological role, probably involved in signal transduction, in the nervous system, via increasing cell surface localization of GRM5 and positively regulating its signaling. Required for the spatial learning process. Acts as a negative regulator of Ca(2+)-calmodulin-dependent protein kinase 2 (CaMK2) phosphorylation. May play a role in modulating melanin-concentrating hormone-mediated functions via its interaction with MCHR1 that interferes with G protein-coupled signal transduction. May be involved in bone metabolism. May also be involved in neurite outgrowth. This is Neurochondrin (Ncdn) from Rattus norvegicus (Rat).